The chain runs to 839 residues: Protein translocase subunit SecA (839 aa).

Residues glutamine 85, glycine 103–threonine 107, and aspartate 493 contribute to the ATP site. Basic and acidic residues predominate over residues glutamine 780–serine 790. A disordered region spans residues glutamine 780–serine 839. The segment covering glutamine 791–threonine 809 has biased composition (polar residues). Zn(2+)-binding residues include cysteine 821, cysteine 823, cysteine 832, and histidine 833. Residues lysine 827–serine 839 show a composition bias toward basic residues.

This sequence belongs to the SecA family. Monomer and homodimer. Part of the essential Sec protein translocation apparatus which comprises SecA, SecYEG and auxiliary proteins SecDF. Other proteins may also be involved. Zn(2+) serves as cofactor.

Its subcellular location is the cell membrane. It is found in the cytoplasm. It catalyses the reaction ATP + H2O + cellular proteinSide 1 = ADP + phosphate + cellular proteinSide 2.. Functionally, part of the Sec protein translocase complex. Interacts with the SecYEG preprotein conducting channel. Has a central role in coupling the hydrolysis of ATP to the transfer of proteins into and across the cell membrane, serving as an ATP-driven molecular motor driving the stepwise translocation of polypeptide chains across the membrane. This chain is Protein translocase subunit SecA, found in Streptococcus pyogenes serotype M3 (strain ATCC BAA-595 / MGAS315).